The primary structure comprises 158 residues: Ribonuclease H (158 aa).

Residues 5 to 146 (MRKQIEIFTD…CDQLAKQGAE (142 aa)) enclose the RNase H type-1 domain. Mg(2+) contacts are provided by D14, E52, D74, and D138.

This sequence belongs to the RNase H family. As to quaternary structure, monomer. The cofactor is Mg(2+).

It is found in the cytoplasm. The enzyme catalyses Endonucleolytic cleavage to 5'-phosphomonoester.. Its function is as follows. Endonuclease that specifically degrades the RNA of RNA-DNA hybrids. This chain is Ribonuclease H, found in Mannheimia succiniciproducens (strain KCTC 0769BP / MBEL55E).